We begin with the raw amino-acid sequence, 587 residues long: MMNPHVQENLQAIHNALSNFDTSFLSEDEEDYCPLCIEPMDITDKNFFPCPCGYQICQFCYNNIRQNPELNGRCPACRRKYDDENVRYVTLSPEELKMERAKLARKEKERKHREKERKENEYTNRKHLSGTRVIQKNLVYVVGINPPVPYEEVAPTLKSEKYFGQYGKINKIVVNRKTPHSNNTTSEHYHHHSPGYGVYITFGSKDDAARCIAQVDGTYMDGRLIKAAYGTTKYCSSYLRGLPCPNPNCMFLHEPGEEADSFNKRELHNKQQAQQQSGGTAFTRSGIHNNISTSTAGSNTNLLSENFTGTPSPAAMRAQLHHDSHTNAGTPVLTPAPVPAGSNPWGVTQSATPVTSINLSKNSSSINLPTLNDSLGHHTTPTTENTITSTTTTTNTNATSHSHGSKKKQSLAAEEYKDPYDALGNAVDFLDARLHSLSNYQKRPISIKSNIIDEETYKKYPSLFSWDKIEASKKSDNTLANKLVEILAIKPIDYTASVVQFLQSVNVGVNDNITITDNTKTPTQPIRLQTVSQQIQPPLNVSTPPPGIFGPQHKVPIQQQQMGDTSSRNSSDLLNQLINGRKIIAGN.

The RING-type zinc finger occupies 33-78 (CPLCIEPMDITDKNFFPCPCGYQICQFCYNNIRQNPELNGRCPACR). Positions 94–128 (EELKMERAKLARKEKERKHREKERKENEYTNRKHL) form a coiled coil. The region spanning 137–228 (NLVYVVGINP…YMDGRLIKAA (92 aa)) is the RRM domain. Residues 229–256 (YGTTKYCSSYLRGLPCPNPNCMFLHEPG) form a C3H1-type zinc finger. Residue lysine 270 forms a Glycyl lysine isopeptide (Lys-Gly) (interchain with G-Cter in ubiquitin) linkage. Threonine 310 is modified (phosphothreonine). Serine 312 is subject to Phosphoserine. Position 326 is a phosphothreonine (threonine 326). At serine 360 the chain carries Phosphoserine. A disordered region spans residues 370 to 412 (TLNDSLGHHTTPTTENTITSTTTTTNTNATSHSHGSKKKQSLA). Low complexity predominate over residues 377-402 (HHTTPTTENTITSTTTTTNTNATSHS).

In terms of assembly, forms a NOT protein complex that comprises NOT1, NOT2, NOT3, NOT4 and NOT5. Subunit of the 1.0 MDa CCR4-NOT core complex that contains CCR4, CAF1, NOT1, NOT2, NOT3, NOT4, NOT5, CAF40 and CAF130. In the complex interacts with NOT1. The core complex probably is part of a less characterized 1.9 MDa CCR4-NOT complex.

Its subcellular location is the cytoplasm. It is found in the nucleus. It carries out the reaction S-ubiquitinyl-[E2 ubiquitin-conjugating enzyme]-L-cysteine + [acceptor protein]-L-lysine = [E2 ubiquitin-conjugating enzyme]-L-cysteine + N(6)-ubiquitinyl-[acceptor protein]-L-lysine.. It participates in protein modification; protein ubiquitination. In terms of biological role, E3 ubiquitin-protein ligase component of the CCR4-NOT core complex, which in the nucleus seems to be a general transcription factor, and in the cytoplasm the major mRNA deadenylase involved in mRNA turnover. The NOT protein subcomplex negatively regulates the basal and activated transcription of many genes. Preferentially affects TC-type TATA element-dependent transcription. Could directly or indirectly inhibit component(s) of the general transcription machinery. In the cytoplasm, catalyzes monoubiquitination of RPS7/es7 in response to stalled ribosomes, initiating a HEL2-dependent response that activates the No-Go Decay (NGD) pathway. The protein is General negative regulator of transcription subunit 4 (MOT2) of Saccharomyces cerevisiae (strain ATCC 204508 / S288c) (Baker's yeast).